Here is a 211-residue protein sequence, read N- to C-terminus: Interleukin-6 (211 aa).

Residues 1-25 (MNSLSTSTFSPVAFSLGLLLVMATA) form the signal peptide. C71 and C77 are oxidised to a cystine. At S80 the chain carries Phosphoserine. C100 and C110 are disulfide-bonded.

It belongs to the IL-6 superfamily. Component of a hexamer of two molecules each of IL6, IL6R and IL6ST; first binds to IL6R to associate with the signaling subunit IL6ST. Interacts with IL6R (via the N-terminal ectodomain); this interaction may be affected by IL6R-binding with SORL1, hence decreasing IL6 cis signaling. Interacts with SORL1 (via the N-terminal ectodomain); this interaction leads to IL6 internalization and lysosomal degradation. May form a trimeric complex with the soluble SORL1 ectodomain and soluble IL6R receptor; this interaction might stabilize circulating IL6, hence promoting IL6 trans signaling.

The protein resides in the secreted. Cytokine with a wide variety of biological functions in immunity, tissue regeneration, and metabolism. Binds to IL6R, then the complex associates to the signaling subunit IL6ST/gp130 to trigger the intracellular IL6-signaling pathway. The interaction with the membrane-bound IL6R and IL6ST stimulates 'classic signaling', whereas the binding of IL6 and soluble IL6R to IL6ST stimulates 'trans-signaling'. Alternatively, 'cluster signaling' occurs when membrane-bound IL6:IL6R complexes on transmitter cells activate IL6ST receptors on neighboring receiver cells. Its function is as follows. IL6 is a potent inducer of the acute phase response. Rapid production of IL6 contributes to host defense during infection and tissue injury, but excessive IL6 synthesis is involved in disease pathology. In the innate immune response, is synthesized by myeloid cells, such as macrophages and dendritic cells, upon recognition of pathogens through toll-like receptors (TLRs) at the site of infection or tissue injury. In the adaptive immune response, is required for the differentiation of B cells into immunoglobulin-secreting cells. Plays a major role in the differentiation of CD4(+) T cell subsets. Essential factor for the development of T follicular helper (Tfh) cells that are required for the induction of germinal-center formation. Required to drive naive CD4(+) T cells to the Th17 lineage. Also required for proliferation of myeloma cells and the survival of plasmablast cells. In terms of biological role, acts as an essential factor in bone homeostasis and on vessels directly or indirectly by induction of VEGF, resulting in increased angiogenesis activity and vascular permeability. Induces, through 'trans-signaling' and synergistically with IL1B and TNF, the production of VEGF. Involved in metabolic controls, is discharged into the bloodstream after muscle contraction increasing lipolysis and improving insulin resistance. 'Trans-signaling' in central nervous system also regulates energy and glucose homeostasis. Mediates, through GLP-1, crosstalk between insulin-sensitive tissues, intestinal L cells and pancreatic islets to adapt to changes in insulin demand. Also acts as a myokine. Plays a protective role during liver injury, being required for maintenance of tissue regeneration. Also has a pivotal role in iron metabolism by regulating HAMP/hepcidin expression upon inflammation or bacterial infection. Through activation of IL6ST-YAP-NOTCH pathway, induces inflammation-induced epithelial regeneration. This Lama glama (Llama) protein is Interleukin-6 (IL6).